The chain runs to 306 residues: Acetylglutamate kinase (306 aa).

Residues 68–69, Arg90, and Asn195 contribute to the substrate site; that span reads GG.

It belongs to the acetylglutamate kinase family. ArgB subfamily.

It is found in the cytoplasm. The catalysed reaction is N-acetyl-L-glutamate + ATP = N-acetyl-L-glutamyl 5-phosphate + ADP. It participates in amino-acid biosynthesis; L-arginine biosynthesis; N(2)-acetyl-L-ornithine from L-glutamate: step 2/4. In terms of biological role, catalyzes the ATP-dependent phosphorylation of N-acetyl-L-glutamate. The chain is Acetylglutamate kinase from Chromohalobacter salexigens (strain ATCC BAA-138 / DSM 3043 / CIP 106854 / NCIMB 13768 / 1H11).